A 220-amino-acid polypeptide reads, in one-letter code: Cysteine-rich venom protein (220 aa).

Residues 20–147 form the SCP domain; that stretch reads DLHNSLRRSV…AYKYFYVCQY (128 aa). 8 cysteine pairs are disulfide-bonded: Cys56–Cys134, Cys73–Cys148, Cys129–Cys145, Cys167–Cys174, Cys170–Cys179, Cys183–Cys215, Cys192–Cys209, and Cys200–Cys213. Residues 183–215 form the ShKT domain; the sequence is CTREDEFINCNDLVKQGCQTDYLKSNCAASCFC.

In terms of tissue distribution, expressed by the venom gland.

The protein localises to the secreted. Functionally, blocks contraction of smooth muscle elicited by high potassium-induced depolarization, but does not block caffeine-stimulated contraction. May target voltage-gated calcium channels in smooth muscle. The chain is Cysteine-rich venom protein from Echis coloratus (Carpet viper).